We begin with the raw amino-acid sequence, 532 residues long: Probable cytochrome P450 524A1 (532 aa).

Residues 8 to 28 traverse the membrane as a helical segment; sequence FIIFILLAALAVFVSEATSKV. Cys-478 contributes to the heme binding site.

It belongs to the cytochrome P450 family. Heme serves as cofactor.

Its subcellular location is the membrane. This is Probable cytochrome P450 524A1 (cyp524A1) from Dictyostelium discoideum (Social amoeba).